Reading from the N-terminus, the 304-residue chain is Oxygen-dependent coproporphyrinogen-III oxidase (304 aa).

Residue serine 93 participates in substrate binding. A divalent metal cation-binding residues include histidine 97 and histidine 107. Residue histidine 107 is the Proton donor of the active site. 109-111 serves as a coordination point for substrate; it reads NVR. The a divalent metal cation site is built by histidine 146 and histidine 176. The important for dimerization stretch occupies residues 241-276; it reads YVEFNLVYDRGTLFGLQSGGRTESILMSLPPQVRWA. 259–261 is a substrate binding site; that stretch reads GGR.

This sequence belongs to the aerobic coproporphyrinogen-III oxidase family. In terms of assembly, homodimer. Requires a divalent metal cation as cofactor.

Its subcellular location is the cytoplasm. The catalysed reaction is coproporphyrinogen III + O2 + 2 H(+) = protoporphyrinogen IX + 2 CO2 + 2 H2O. The protein operates within porphyrin-containing compound metabolism; protoporphyrin-IX biosynthesis; protoporphyrinogen-IX from coproporphyrinogen-III (O2 route): step 1/1. Its function is as follows. Involved in the heme biosynthesis. Catalyzes the aerobic oxidative decarboxylation of propionate groups of rings A and B of coproporphyrinogen-III to yield the vinyl groups in protoporphyrinogen-IX. This is Oxygen-dependent coproporphyrinogen-III oxidase from Pseudomonas fluorescens (strain Pf0-1).